We begin with the raw amino-acid sequence, 206 residues long: Ribosomal RNA large subunit methyltransferase E (206 aa).

G60, W62, D80, D96, and D121 together coordinate S-adenosyl-L-methionine. Residue K161 is the Proton acceptor of the active site.

This sequence belongs to the class I-like SAM-binding methyltransferase superfamily. RNA methyltransferase RlmE family.

It localises to the cytoplasm. It catalyses the reaction uridine(2552) in 23S rRNA + S-adenosyl-L-methionine = 2'-O-methyluridine(2552) in 23S rRNA + S-adenosyl-L-homocysteine + H(+). Its function is as follows. Specifically methylates the uridine in position 2552 of 23S rRNA at the 2'-O position of the ribose in the fully assembled 50S ribosomal subunit. This is Ribosomal RNA large subunit methyltransferase E from Nitrosomonas europaea (strain ATCC 19718 / CIP 103999 / KCTC 2705 / NBRC 14298).